A 117-amino-acid polypeptide reads, in one-letter code: Chondroitin proteoglycan 7 (117 aa).

An N-terminal signal peptide occupies residues 1–19; the sequence is MQTITLLALLACIAVPIFA. Residues 31-97 form a disordered region; that stretch reads VEASGEGSGE…SGENLSNGIV (67 aa). Low complexity-rich tracts occupy residues 32–41 and 48–57; these read EASGEGSGES and ESSGEGSGES. O-linked (Xyl...) (chondroitin sulfate) serine glycans are attached at residues S66, S70, S74, S84, and S88. Low complexity predominate over residues 75–95; the sequence is GASDAVLESSGEGSGENLSNG. The N-linked (GlcNAc...) asparagine glycan is linked to N91.

The chain is Chondroitin proteoglycan 7 (cpg-7) from Caenorhabditis briggsae.